We begin with the raw amino-acid sequence, 328 residues long: MIYQMQMPTKIDVDEATHTGSFGRFIAQPLERGYGVTLGNAMRRVLLASLPGTAITGIKIDGVFHEFSTIDGVREDVPEIVLNLKKVRFKSNCKRSCKTTLTLAGPKDFLAGDIVAQEGEFEVLNKDLHIATINSEATVTIDIYIGRGRGYVPAEENRSDGMPIGFIAIDSIYTPIKNVKLTVENTRVGQKTDYEKMILDVETDGSITPDDAISLAGKIINDHITFFANFSPTEEEFSEEEYKQLDDEFESMRKLLQTKIEDLDLSVRSHNCLRLAEIDSLGDLVSRREEELLNYKNFGKKSLTELKEQLEKFNLKFGMDITRYQLKG.

An alpha N-terminal domain (alpha-NTD) region spans residues 1–231; sequence MIYQMQMPTK…DHITFFANFS (231 aa). Residues 247–328 form an alpha C-terminal domain (alpha-CTD) region; it reads DEFESMRKLL…MDITRYQLKG (82 aa).

This sequence belongs to the RNA polymerase alpha chain family. Homodimer. The RNAP catalytic core consists of 2 alpha, 1 beta, 1 beta' and 1 omega subunit. When a sigma factor is associated with the core the holoenzyme is formed, which can initiate transcription.

It carries out the reaction RNA(n) + a ribonucleoside 5'-triphosphate = RNA(n+1) + diphosphate. In terms of biological role, DNA-dependent RNA polymerase catalyzes the transcription of DNA into RNA using the four ribonucleoside triphosphates as substrates. The sequence is that of DNA-directed RNA polymerase subunit alpha from Chlorobaculum tepidum (strain ATCC 49652 / DSM 12025 / NBRC 103806 / TLS) (Chlorobium tepidum).